The sequence spans 89 residues: Small ribosomal subunit protein uS15 (89 aa).

A compositionally biased stretch (basic and acidic residues) spans 1–11 (MSITAERKAEV). Residues 1 to 25 (MSITAERKAEVIKTNARKSGDTGSP) are disordered.

Belongs to the universal ribosomal protein uS15 family. As to quaternary structure, part of the 30S ribosomal subunit. Forms a bridge to the 50S subunit in the 70S ribosome, contacting the 23S rRNA.

One of the primary rRNA binding proteins, it binds directly to 16S rRNA where it helps nucleate assembly of the platform of the 30S subunit by binding and bridging several RNA helices of the 16S rRNA. Its function is as follows. Forms an intersubunit bridge (bridge B4) with the 23S rRNA of the 50S subunit in the ribosome. The polypeptide is Small ribosomal subunit protein uS15 (Nitrobacter hamburgensis (strain DSM 10229 / NCIMB 13809 / X14)).